The chain runs to 338 residues: MKSVGINGYGTIGKRVADAVSAQDDMKIVGVTKRSPDFEARMAVEKGYDLYISAPERENSFEEAGIKVTGTAEELFEKLDIVVDCTPEGIGAKNKEGTYEKMGLKATFQGGEKHDQIGLSFNSFSNYKDVIGKDYARVVSCNTTGLCRTLNPINDLCGIKKVRAVMVRRGADPSQVKKGPINAIVPNPPTVPSHHGPDVQTVMYDLNITTMALLVPTTLMHQHNLMVELESSVSIDDIKDKLNETPRVLLLKAKEGLGSTAEFMEYAKELGRSRNDLFEIGVWEESLNIVDGELYYMQAIHQESDVVPENVDAIRAMLEMEDNPSKSIEKTNKAMGIL.

NAD(+) contacts are provided by residues 11–12 (TI) and Gly111. D-glyceraldehyde 3-phosphate is bound at residue 140–142 (SCN). The Nucleophile role is filled by Cys141. Arg169 contacts NAD(+). 195–196 (HG) is a binding site for D-glyceraldehyde 3-phosphate. Gln302 is an NAD(+) binding site.

It belongs to the glyceraldehyde-3-phosphate dehydrogenase family. As to quaternary structure, homotetramer.

The protein localises to the cytoplasm. The catalysed reaction is D-glyceraldehyde 3-phosphate + phosphate + NADP(+) = (2R)-3-phospho-glyceroyl phosphate + NADPH + H(+). It carries out the reaction D-glyceraldehyde 3-phosphate + phosphate + NAD(+) = (2R)-3-phospho-glyceroyl phosphate + NADH + H(+). It functions in the pathway carbohydrate degradation; glycolysis; pyruvate from D-glyceraldehyde 3-phosphate: step 1/5. The protein is Glyceraldehyde-3-phosphate dehydrogenase (gap) of Methanobacterium formicicum.